Consider the following 134-residue polypeptide: Ribosome-binding factor A (134 aa).

It belongs to the RbfA family. In terms of assembly, monomer. Binds 30S ribosomal subunits, but not 50S ribosomal subunits or 70S ribosomes.

It localises to the cytoplasm. Its function is as follows. One of several proteins that assist in the late maturation steps of the functional core of the 30S ribosomal subunit. Associates with free 30S ribosomal subunits (but not with 30S subunits that are part of 70S ribosomes or polysomes). Required for efficient processing of 16S rRNA. May interact with the 5'-terminal helix region of 16S rRNA. This chain is Ribosome-binding factor A, found in Cyanothece sp. (strain PCC 7425 / ATCC 29141).